The sequence spans 170 residues: Large ribosomal subunit protein bL17 (170 aa).

The segment covering 124–134 has biased composition (low complexity); sequence AAEAPKAAKAA. The disordered stretch occupies residues 124–170; the sequence is AAEAPKAAKAAPVKEAKPAAEEAPAKPKRTRKPKADEADAEAAKEEN. Composition is skewed to basic and acidic residues over residues 135-148 and 156-170; these read PVKE…EAPA and PKAD…KEEN.

It belongs to the bacterial ribosomal protein bL17 family. In terms of assembly, part of the 50S ribosomal subunit. Contacts protein L32.

The protein is Large ribosomal subunit protein bL17 of Desulfovibrio desulfuricans (strain ATCC 27774 / DSM 6949 / MB).